A 114-amino-acid polypeptide reads, in one-letter code: MSETIEGNVQILRLSPGDSTNFPKPGDLVTIHYTGTLENGQKFDSSVDRGSPFQCNIGVGQVIKGWDAAIPKLSVGEKARLTIPGPYAYGPRGFPGLIPPNATLVFDVELLKIN.

The PPIase FKBP-type domain occupies 26–114 (GDLVTIHYTG…VFDVELLKIN (89 aa)).

The protein belongs to the FKBP-type PPIase family. FKBP1 subfamily.

The protein resides in the cytoplasm. It carries out the reaction [protein]-peptidylproline (omega=180) = [protein]-peptidylproline (omega=0). Its activity is regulated as follows. Inhibited by both FK506 and rapamycin. Functionally, PPIases accelerate the folding of proteins. It catalyzes the cis-trans isomerization of proline imidic peptide bonds in oligopeptides. The sequence is that of FK506-binding protein 1 (FPR1) from Kluyveromyces lactis (strain ATCC 8585 / CBS 2359 / DSM 70799 / NBRC 1267 / NRRL Y-1140 / WM37) (Yeast).